A 156-amino-acid polypeptide reads, in one-letter code: Myosin regulatory light chain, striated adductor muscle (156 aa).

At Ala-1 the chain carries Blocked amino end (Ala). 2 consecutive EF-hand domains span residues 15 to 50 (KQIQEMKEAFSMLDVDRDGFVNKDDLKAISEQLGRT) and 84 to 119 (DSEETIRNAFAMFDELETKKLNIEYIKDLLENMGDN). Asp-28, Asp-30, Asp-32, and Asp-39 together coordinate Ca(2+).

In terms of biological role, in molluscan muscle, calcium regulation is associated with myosin rather than with actin. Muscle myosin contains two types of light chains: the catalytic light chain, essential for ATPase activity, and the regulatory light chain, a calcium-binding protein responsible for Ca(2+) dependent binding and Ca(2+) dependent Mg-ATPase activity. The polypeptide is Myosin regulatory light chain, striated adductor muscle (Chlamys nipponensis akazara (Akazara scallop)).